We begin with the raw amino-acid sequence, 126 residues long: Probable 4-amino-4-deoxy-L-arabinose-phosphoundecaprenol flippase subunit ArnF (126 aa).

The helical transmembrane segment at 1–21 (MGFFWALLSVGLVSAAQLLLR) threads the bilayer. Over 22 to 47 (SAMVALPPLTDIVAFLQHLLHFQPGT) the chain is Periplasmic. A helical membrane pass occupies residues 48–68 (FGLFFGLLGYLLSMVCWYFAL). Topologically, residues 69–76 (HRLPLSKA) are cytoplasmic. Residues 77–97 (YALLSLSYILVWAAAIWLPGW) traverse the membrane as a helical segment. The Periplasmic portion of the chain corresponds to 98–100 (HEP). Residues 101–121 (FYWQSLLGVAIIVAGVLTIFW) traverse the membrane as a helical segment. Residues 122–126 (PVKRR) are Cytoplasmic-facing.

Belongs to the ArnF family. As to quaternary structure, heterodimer of ArnE and ArnF.

Its subcellular location is the cell inner membrane. Its pathway is bacterial outer membrane biogenesis; lipopolysaccharide biosynthesis. Functionally, translocates 4-amino-4-deoxy-L-arabinose-phosphoundecaprenol (alpha-L-Ara4N-phosphoundecaprenol) from the cytoplasmic to the periplasmic side of the inner membrane. The sequence is that of Probable 4-amino-4-deoxy-L-arabinose-phosphoundecaprenol flippase subunit ArnF from Klebsiella pneumoniae subsp. pneumoniae (strain ATCC 700721 / MGH 78578).